Reading from the N-terminus, the 145-residue chain is Deoxyuridine 5'-triphosphate nucleotidohydrolase (145 aa).

Substrate is bound by residues 62 to 64 (RSG), N75, and 79 to 81 (TVD).

This sequence belongs to the dUTPase family. Mg(2+) is required as a cofactor.

It carries out the reaction dUTP + H2O = dUMP + diphosphate + H(+). Its pathway is pyrimidine metabolism; dUMP biosynthesis; dUMP from dCTP (dUTP route): step 2/2. In terms of biological role, this enzyme is involved in nucleotide metabolism: it produces dUMP, the immediate precursor of thymidine nucleotides and it decreases the intracellular concentration of dUTP so that uracil cannot be incorporated into DNA. The polypeptide is Deoxyuridine 5'-triphosphate nucleotidohydrolase (Gloeothece citriformis (strain PCC 7424) (Cyanothece sp. (strain PCC 7424))).